A 433-amino-acid chain; its full sequence is sn-glycerol-3-phosphate-binding periplasmic protein UgpB (433 aa).

A signal peptide spans 1–25 (MFTRLITTSALTGAIALTIGSQAFA). Tyr-67, Asp-91, Ser-146, Ser-273, Gly-307, Tyr-346, and Arg-397 together coordinate sn-glycerol 3-phosphate.

It belongs to the bacterial solute-binding protein 1 family. In terms of assembly, the complex is composed of two ATP-binding proteins (UgpC), two transmembrane proteins (UgpA and UgpE) and a solute-binding protein (UgpB).

It localises to the periplasm. In terms of biological role, part of the ABC transporter complex UgpBAEC involved in sn-glycerol-3-phosphate (G3P) import. Binds G3P. The sequence is that of sn-glycerol-3-phosphate-binding periplasmic protein UgpB (ugpB) from Brucella melitensis biotype 1 (strain ATCC 23456 / CCUG 17765 / NCTC 10094 / 16M).